The primary structure comprises 1202 residues: Protein HASTY 1 (1202 aa).

N-acetylmethionine is present on Met-1.

The protein belongs to the exportin family. In terms of assembly, interacts with RAN1. As to expression, expressed in roots, leaves and floral buds.

The protein localises to the nucleus. In terms of biological role, nucleocytoplasmic transporter involved in the nuclear export of microRNAs (miRNAs). Required for several miRNAs accumulation. Specifically required for miR156 accumulation which targets SPL3, SPL4 and SPL5 transcription factors. Involved in plant development through its role in miRNAs processing. Required for vegetative phase change and vegetative to reproductive phase transition. Functionally dependent on RAN1 binding. Does not seem to be involved in small interfering RNAs (siRNAs) processing. In Arabidopsis thaliana (Mouse-ear cress), this protein is Protein HASTY 1 (HST1).